The following is a 463-amino-acid chain: Kynureninase 2 (463 aa).

Pyridoxal 5'-phosphate is bound by residues leucine 134, threonine 135, 162-165 (FPSD), aspartate 247, histidine 250, and tyrosine 272. An N6-(pyridoxal phosphate)lysine modification is found at lysine 273. Positions 312 and 340 each coordinate pyridoxal 5'-phosphate.

It belongs to the kynureninase family. In terms of assembly, homodimer. Pyridoxal 5'-phosphate is required as a cofactor.

The protein localises to the cytoplasm. The catalysed reaction is L-kynurenine + H2O = anthranilate + L-alanine + H(+). It carries out the reaction 3-hydroxy-L-kynurenine + H2O = 3-hydroxyanthranilate + L-alanine + H(+). It functions in the pathway amino-acid degradation; L-kynurenine degradation; L-alanine and anthranilate from L-kynurenine: step 1/1. Its pathway is cofactor biosynthesis; NAD(+) biosynthesis; quinolinate from L-kynurenine: step 2/3. In terms of biological role, catalyzes the cleavage of L-kynurenine (L-Kyn) and L-3-hydroxykynurenine (L-3OHKyn) into anthranilic acid (AA) and 3-hydroxyanthranilic acid (3-OHAA), respectively. In Aspergillus terreus (strain NIH 2624 / FGSC A1156), this protein is Kynureninase 2 (bna5-2).